The primary structure comprises 301 residues: Protoheme IX farnesyltransferase (301 aa).

The next 9 helical transmembrane spans lie at 29-49 (VVALMLLTVLVGMCLAVPGVV), 51-71 (IVPLIAGMAGIGMMAGSAAAF), 96-118 (VSIAKALTFSCSLGILGFVVLYV), 123-143 (LTAWLTFASLIGYAVVYTAYL), 151-171 (IVVGGLAGAMPPLLGWTAVTG), 177-197 (ALLLVIIIFAWTPPHFWALAI), 223-243 (CIFLYTILLAIACLLPVLVGM), 244-264 (CGPVYLVSSTLLSVTFIYKAW), and 281-301 (FSIYHLMLLFIALLVDHYLWL).

This sequence belongs to the UbiA prenyltransferase family. Protoheme IX farnesyltransferase subfamily.

The protein localises to the cell inner membrane. The catalysed reaction is heme b + (2E,6E)-farnesyl diphosphate + H2O = Fe(II)-heme o + diphosphate. The protein operates within porphyrin-containing compound metabolism; heme O biosynthesis; heme O from protoheme: step 1/1. Functionally, converts heme B (protoheme IX) to heme O by substitution of the vinyl group on carbon 2 of heme B porphyrin ring with a hydroxyethyl farnesyl side group. The polypeptide is Protoheme IX farnesyltransferase (Shewanella halifaxensis (strain HAW-EB4)).